We begin with the raw amino-acid sequence, 155 residues long: Putative pre-16S rRNA nuclease (155 aa).

It belongs to the YqgF nuclease family.

It is found in the cytoplasm. Its function is as follows. Could be a nuclease involved in processing of the 5'-end of pre-16S rRNA. This chain is Putative pre-16S rRNA nuclease, found in Novosphingobium aromaticivorans (strain ATCC 700278 / DSM 12444 / CCUG 56034 / CIP 105152 / NBRC 16084 / F199).